The following is a 337-amino-acid chain: Ketol-acid reductoisomerase (NADP(+)) (337 aa).

Residues I3–T183 form the KARI N-terminal Rossmann domain. NADP(+) contacts are provided by residues Y26–Q29, R49, S52, S54, and D84–Q87. H109 is an active-site residue. G135 serves as a coordination point for NADP(+). The KARI C-terminal knotted domain occupies T184–V329. Mg(2+) contacts are provided by D192, E196, E228, and E232. S253 provides a ligand contact to substrate.

It belongs to the ketol-acid reductoisomerase family. Mg(2+) serves as cofactor.

The catalysed reaction is (2R)-2,3-dihydroxy-3-methylbutanoate + NADP(+) = (2S)-2-acetolactate + NADPH + H(+). It carries out the reaction (2R,3R)-2,3-dihydroxy-3-methylpentanoate + NADP(+) = (S)-2-ethyl-2-hydroxy-3-oxobutanoate + NADPH + H(+). Its pathway is amino-acid biosynthesis; L-isoleucine biosynthesis; L-isoleucine from 2-oxobutanoate: step 2/4. It participates in amino-acid biosynthesis; L-valine biosynthesis; L-valine from pyruvate: step 2/4. Involved in the biosynthesis of branched-chain amino acids (BCAA). Catalyzes an alkyl-migration followed by a ketol-acid reduction of (S)-2-acetolactate (S2AL) to yield (R)-2,3-dihydroxy-isovalerate. In the isomerase reaction, S2AL is rearranged via a Mg-dependent methyl migration to produce 3-hydroxy-3-methyl-2-ketobutyrate (HMKB). In the reductase reaction, this 2-ketoacid undergoes a metal-dependent reduction by NADPH to yield (R)-2,3-dihydroxy-isovalerate. The chain is Ketol-acid reductoisomerase (NADP(+)) from Corynebacterium efficiens (strain DSM 44549 / YS-314 / AJ 12310 / JCM 11189 / NBRC 100395).